The sequence spans 1086 residues: ATP-dependent helicase/deoxyribonuclease subunit B (1086 aa).

This sequence belongs to the helicase family. AddB/RexB type 2 subfamily. Heterodimer of AddA and RexB. Requires Mg(2+) as cofactor.

Functionally, the heterodimer acts as both an ATP-dependent DNA helicase and an ATP-dependent, dual-direction single-stranded exonuclease. Recognizes the chi site generating a DNA molecule suitable for the initiation of homologous recombination. This subunit has 5' -&gt; 3' nuclease activity but not helicase activity. In Streptococcus uberis (strain ATCC BAA-854 / 0140J), this protein is ATP-dependent helicase/deoxyribonuclease subunit B.